Consider the following 649-residue polypeptide: Probable potassium transport system protein Kup (649 aa).

The next 12 helical transmembrane spans lie at 1-21, 42-62, 84-104, 126-146, 159-179, 195-215, 235-255, 286-306, 334-354, 364-384, 390-410, and 414-434; these read MAIVALGVVYGDIGTSPLYTM, ILSLVFWSITLITTVKYVFIA, GAWLAIPAMLGGAAFLADSVL, IMSGNKELTLMITIVIIVCLF, TFGTVVMIWFSFLAVVGLVNL, VEFLFSHHNAAGLAVMGTVFL, IYFTWPFIKIALVFCYFGQGA, VAVLLSVCAGVIASQALITGA, LYIPVVNAVLCVSTLLVLAMF, YGLALTVTMITTTILLAVYIW, VGAVVFTVVFLAIQFLFFFAS, and FLHGGWFTMLLTLAILLIMYT.

Belongs to the HAK/KUP transporter (TC 2.A.72) family.

It localises to the cell membrane. It catalyses the reaction K(+)(in) + H(+)(in) = K(+)(out) + H(+)(out). Its function is as follows. Transport of potassium into the cell. Likely operates as a K(+):H(+) symporter. The chain is Probable potassium transport system protein Kup from Bifidobacterium adolescentis (strain ATCC 15703 / DSM 20083 / NCTC 11814 / E194a).